The chain runs to 488 residues: Ankyrin repeat domain-containing protein 13C (488 aa).

Residues 1–60 (MTGEKIRSVRKERKSGLDLLEPDEEPAATGPAKHRGSKIFSGGNHRISRSSSSPGDPDGA) are disordered. Low complexity predominate over residues 41-59 (SGGNHRISRSSSSPGDPDG). ANK repeat units follow at residues 58–87 (DGAY…IAQK), 90–119 (HGNT…PVKV), and 123–152 (QGWS…QQSR).

It localises to the endoplasmic reticulum membrane. Acts as a molecular chaperone for G protein-coupled receptors, regulating their biogenesis and exit from the ER. The polypeptide is Ankyrin repeat domain-containing protein 13C (ankrd13c) (Danio rerio (Zebrafish)).